The primary structure comprises 157 residues: ABA-responsive protein ABR17 (157 aa).

It belongs to the BetVI family.

This chain is ABA-responsive protein ABR17, found in Pisum sativum (Garden pea).